A 963-amino-acid polypeptide reads, in one-letter code: VPS35 endosomal protein-sorting factor-like (963 aa).

The disordered stretch occupies residues 43 to 112 (SKTKKVSRKG…DKDENSFVGP (70 aa)). Positions 51-72 (KGSTSSTSSSSSSSVIDPLSSV) are enriched in low complexity. The residue at position 265 (Ser265) is a Phosphoserine. A helical transmembrane segment spans residues 699 to 719 (AFVRACVAYCFITIPSLVGIF).

The protein belongs to the VPS35L family. Component of the heterotrimeric retriever complex formed by VPS26C, VPS29 and VPS35L. Interacts with VPS29. Interacts with COMMD1, CCDC93 and CCDC22; associates with the CCC (COMMD/CCDC22/CCDC93) complex which contains at least COMMD1 (and possibly other COMM domain-containing proteins), CCDC22 and CCDC93. Interacts with WASHC1, WASHC2A and WASHC2C. Interacts with SNX17 and SNX31.

The protein localises to the membrane. The protein resides in the endosome. Functionally, acts as a component of the retriever complex. The retriever complex is a heterotrimeric complex related to retromer cargo-selective complex (CSC) and essential for retromer-independent retrieval and recycling of numerous cargos such as integrin alpha-5/beta-1 (ITGA5:ITGB1). The recruitment of the retriever complex to the endosomal membrane involves CCC and WASH complexes. In the endosomes, drives the retrieval and recycling of NxxY-motif-containing cargo proteins by coupling to SNX17, a cargo essential for the homeostatic maintenance of numerous cell surface proteins associated with processes that include cell migration, cell adhesion, nutrient supply and cell signaling. Involved in copper-dependent ATP7A trafficking between the trans-Golgi network and vesicles in the cell periphery; the function is proposed to depend on its association with the CCC complex and cooperation with the WASH complex on early endosomes. Seems not to be required for CCC complex stability. The chain is VPS35 endosomal protein-sorting factor-like from Mus musculus (Mouse).